The following is a 288-amino-acid chain: Glycine--tRNA ligase alpha subunit (288 aa).

The protein belongs to the class-II aminoacyl-tRNA synthetase family. Tetramer of two alpha and two beta subunits.

It is found in the cytoplasm. The catalysed reaction is tRNA(Gly) + glycine + ATP = glycyl-tRNA(Gly) + AMP + diphosphate. In Rickettsia canadensis (strain McKiel), this protein is Glycine--tRNA ligase alpha subunit.